The following is a 258-amino-acid chain: Indole-3-glycerol phosphate synthase (258 aa).

This sequence belongs to the TrpC family.

The catalysed reaction is 1-(2-carboxyphenylamino)-1-deoxy-D-ribulose 5-phosphate + H(+) = (1S,2R)-1-C-(indol-3-yl)glycerol 3-phosphate + CO2 + H2O. It participates in amino-acid biosynthesis; L-tryptophan biosynthesis; L-tryptophan from chorismate: step 4/5. This Chlorobium limicola (strain DSM 245 / NBRC 103803 / 6330) protein is Indole-3-glycerol phosphate synthase.